Consider the following 904-residue polypeptide: Alpha-actinin-4 (904 aa).

Positions 1-27 (MVDYHSAGQPYPYGGNGPGPNGDYMAQ) are disordered. Positions 1–259 (MVDYHSAGQP…IMTYVSSFYH (259 aa)) are actin-binding. 2 consecutive Calponin-homology (CH) domains span residues 43–147 (KQQR…LRFA) and 156–262 (TSAK…HAFS). Spectrin repeat units follow at residues 286-396 (HLME…WLLN), 406-511 (HLAE…ALEK), 521-632 (ELHL…ALQD), and 642-745 (RLRR…EVEN). 2 EF-hand domains span residues 758–793 (EQMQ…LGYD) and 799–834 (QGDA…ETTD). The Ca(2+) site is built by Asp771, Asp773, Glu782, Asp812, Asn814, Ser816, and Ser818.

Belongs to the alpha-actinin family. Homodimer; antiparallel. Component of the CART complex. May interact with nuclear receptors.

It is found in the nucleus. It localises to the cytoplasm. Its subcellular location is the cell junction. The protein localises to the perinuclear region. In terms of biological role, F-actin cross-linking protein which is thought to anchor actin to a variety of intracellular structures. This is a bundling protein. Probably involved in vesicular trafficking via its association with the CART complex. Involved in tight junction assembly in epithelial cells. May also function as a transcriptional coactivator, stimulating transcription mediated by nuclear hormone receptors. In Gallus gallus (Chicken), this protein is Alpha-actinin-4.